The sequence spans 267 residues: 2-keto-3-deoxy-L-rhamnonate aldolase (267 aa).

The active-site Proton acceptor is H49. Q151 lines the substrate pocket. E153 lines the Mg(2+) pocket. A178 and D179 together coordinate substrate. D179 serves as a coordination point for Mg(2+).

Belongs to the HpcH/HpaI aldolase family. KDR aldolase subfamily. As to quaternary structure, homohexamer. It depends on Mg(2+) as a cofactor.

The catalysed reaction is 2-dehydro-3-deoxy-L-rhamnonate = (S)-lactaldehyde + pyruvate. In terms of biological role, catalyzes the reversible retro-aldol cleavage of 2-keto-3-deoxy-L-rhamnonate (KDR) to pyruvate and lactaldehyde. The sequence is that of 2-keto-3-deoxy-L-rhamnonate aldolase from Escherichia coli O17:K52:H18 (strain UMN026 / ExPEC).